We begin with the raw amino-acid sequence, 442 residues long: Transposase InsG for insertion sequence element IS4 (442 aa).

This sequence belongs to the transposase 11 family.

Its function is as follows. Involved in the transposition of the insertion sequence IS4. This chain is Transposase InsG for insertion sequence element IS4 (insG), found in Escherichia coli (strain K12).